The sequence spans 332 residues: GTP cyclohydrolase-2 (332 aa).

Disordered stretches follow at residues 1–20 (MASK…SETH) and 25–46 (PLLS…IPPE). Positions 29 to 41 (PTLTPSHIPSQTP) are enriched in polar residues. 171 to 175 (RIHSE) provides a ligand contact to GTP. Zn(2+) contacts are provided by C176, C187, and C189. GTP-binding positions include Q192, 214–216 (EGR), and T236. Catalysis depends on D248, which acts as the Proton acceptor. R250 functions as the Nucleophile in the catalytic mechanism. Residues T271 and K276 each coordinate GTP.

Belongs to the GTP cyclohydrolase II family. Requires Zn(2+) as cofactor.

The catalysed reaction is GTP + 4 H2O = 2,5-diamino-6-hydroxy-4-(5-phosphoribosylamino)-pyrimidine + formate + 2 phosphate + 3 H(+). Its pathway is cofactor biosynthesis; riboflavin biosynthesis; 5-amino-6-(D-ribitylamino)uracil from GTP: step 1/4. In terms of biological role, catalyzes the conversion of GTP to 2,5-diamino-6-ribosylamino-4(3H)-pyrimidinone 5'-phosphate (DARP), formate and pyrophosphate. This chain is GTP cyclohydrolase-2 (RIB1), found in Meyerozyma guilliermondii (strain ATCC 6260 / CBS 566 / DSM 6381 / JCM 1539 / NBRC 10279 / NRRL Y-324) (Yeast).